The following is a 318-amino-acid chain: MKARGFKTKMRGFKIFSGSAHPAFGKEVSKHLGFPLSKAVIGKFSDGEINIQISESVRGKDIFIIQPTCVPVNDNLMELLVMVDALRRSSANSITAVLPYFGYARQDRKAAPRVPITAKMVANLMQEVGIERIITMDLHAGQIQGFFDVPVDNLYGSIVFRDYIRSKALKNPIIASPDVGGVTRARYFANQMGLDLIIVDKRREKANESEVMNIIGSAKERDVILVDDMIDTAGTICKAALALKEQGATSVMALGTHAVLSGNAIKRIKESALDEVVVTNSIPLVQKCDKITTLSVASLFAEVIRRIYHNESVQSLFT.

ATP is bound by residues 46 to 48 and 105 to 106; these read DGE and RQ. Mg(2+) contacts are provided by H139 and D178. K201 is an active-site residue. Residues R203, D227, and 231-235 each bind D-ribose 5-phosphate; that span reads DTAGT.

It belongs to the ribose-phosphate pyrophosphokinase family. Class I subfamily. As to quaternary structure, homohexamer. Requires Mg(2+) as cofactor.

The protein resides in the cytoplasm. It carries out the reaction D-ribose 5-phosphate + ATP = 5-phospho-alpha-D-ribose 1-diphosphate + AMP + H(+). Its pathway is metabolic intermediate biosynthesis; 5-phospho-alpha-D-ribose 1-diphosphate biosynthesis; 5-phospho-alpha-D-ribose 1-diphosphate from D-ribose 5-phosphate (route I): step 1/1. Its function is as follows. Involved in the biosynthesis of the central metabolite phospho-alpha-D-ribosyl-1-pyrophosphate (PRPP) via the transfer of pyrophosphoryl group from ATP to 1-hydroxyl of ribose-5-phosphate (Rib-5-P). The sequence is that of Ribose-phosphate pyrophosphokinase from Helicobacter pylori (strain J99 / ATCC 700824) (Campylobacter pylori J99).